The following is a 233-amino-acid chain: Ras-related protein Rab-20 (233 aa).

The GTP site is built by glycine 17, lysine 18, threonine 19, aspartate 32, and threonine 36. Position 19 (threonine 19) interacts with Mg(2+). 2 short sequence motifs (switch) span residues 28-41 and 55-72; these read RRFP…GGAF and DTAG…YCRG. Mg(2+)-binding residues include threonine 36 and aspartate 55. Residues glycine 58, asparagine 113, lysine 114, and aspartate 116 each coordinate GTP. The span at 119–130 shows a compositional bias: basic and acidic residues; that stretch reads SERDTEGGEKEG. The disordered stretch occupies residues 119–138; that stretch reads SERDTEGGEKEGPASGKVGS. GTP contacts are provided by alanine 183 and lysine 184. S-geranylgeranyl cysteine attachment occurs at residues cysteine 231 and cysteine 232.

Belongs to the small GTPase superfamily. Rab family. The cofactor is Mg(2+). Present in a variety of tissues, but not in brain.

It is found in the cytoplasmic vesicle. Its subcellular location is the phagosome. The protein resides in the phagosome membrane. The protein localises to the golgi apparatus. It catalyses the reaction GTP + H2O = GDP + phosphate + H(+). With respect to regulation, regulated by guanine nucleotide exchange factors (GEFs) which promote the exchange of bound GDP for free GTP. Regulated by GTPase activating proteins (GAPs) which increase the GTP hydrolysis activity. Inhibited by GDP dissociation inhibitors (GDIs). Plays a role in apical endocytosis/recycling. Plays a role in the maturation and acidification of phagosomes that engulf pathogens, such as S.aureus and Mycobacterium. Plays a role in the fusion of phagosomes with lysosomes. The polypeptide is Ras-related protein Rab-20 (Mus musculus (Mouse)).